The following is a 116-amino-acid chain: Large ribosomal subunit protein bL17 (116 aa).

It belongs to the bacterial ribosomal protein bL17 family. As to quaternary structure, part of the 50S ribosomal subunit. Contacts protein L32.

The chain is Large ribosomal subunit protein bL17 from Prochlorococcus marinus (strain MIT 9301).